The sequence spans 55 residues: Regulatory protein MokB (55 aa).

Functionally, overlapping regulatory peptide whose translation enables hokB expression. This is Regulatory protein MokB (mokB) from Escherichia coli (strain K12).